Here is a 74-residue protein sequence, read N- to C-terminus: Guanine nucleotide-binding protein G(T) subunit gamma-T1 (74 aa).

Cys71 bears the Cysteine methyl ester mark. Cys71 carries S-farnesyl cysteine lipidation. A propeptide spans 72 to 74 (VIS) (removed in mature form).

Belongs to the G protein gamma family. G proteins are composed of 3 units, alpha, beta and gamma. As to expression, retinal rod outer segment.

It localises to the cell membrane. Guanine nucleotide-binding proteins (G proteins) are involved as a modulator or transducer in various transmembrane signaling systems. The beta and gamma chains are required for the GTPase activity, for replacement of GDP by GTP, and for G protein-effector interaction. The polypeptide is Guanine nucleotide-binding protein G(T) subunit gamma-T1 (Gngt1) (Mus musculus (Mouse)).